Reading from the N-terminus, the 460-residue chain is Cation efflux system protein CusC (460 aa).

The first 17 residues, 1–17 (MSPCKLLPFCVALALTG), serve as a signal peptide directing secretion. Cys-18 carries N-palmitoyl cysteine lipidation. Cys-18 carries S-diacylglycerol cysteine lipidation.

Belongs to the outer membrane factor (OMF) (TC 1.B.17) family. As to quaternary structure, homotrimer. Component of the cus efflux system composed of CusA, CusB, CusC and CusF.

It is found in the cell outer membrane. Forms pores that allow passive diffusion of cations across the outer membrane. Part of a cation efflux system that mediates resistance to copper and silver. The polypeptide is Cation efflux system protein CusC (cusC) (Escherichia coli O157:H7).